A 68-amino-acid polypeptide reads, in one-letter code: Protein SlyX homolog (68 aa).

It belongs to the SlyX family.

This chain is Protein SlyX homolog, found in Brucella melitensis biotype 1 (strain ATCC 23456 / CCUG 17765 / NCTC 10094 / 16M).